The primary structure comprises 117 residues: Holo-[acyl-carrier-protein] synthase (117 aa).

Mg(2+) contacts are provided by aspartate 8 and glutamate 58.

Belongs to the P-Pant transferase superfamily. AcpS family. The cofactor is Mg(2+).

It is found in the cytoplasm. It carries out the reaction apo-[ACP] + CoA = holo-[ACP] + adenosine 3',5'-bisphosphate + H(+). Transfers the 4'-phosphopantetheine moiety from coenzyme A to a Ser of acyl-carrier-protein. The chain is Holo-[acyl-carrier-protein] synthase from Staphylococcus epidermidis (strain ATCC 35984 / DSM 28319 / BCRC 17069 / CCUG 31568 / BM 3577 / RP62A).